The sequence spans 509 residues: Maturase K (509 aa).

Belongs to the intron maturase 2 family. MatK subfamily.

The protein localises to the plastid. It is found in the chloroplast. Usually encoded in the trnK tRNA gene intron. Probably assists in splicing its own and other chloroplast group II introns. The polypeptide is Maturase K (Arpophyllum giganteum (Hyacinth orchid)).